Here is a 631-residue protein sequence, read N- to C-terminus: DDB1- and CUL4-associated factor 8-like protein 2 (631 aa).

2 disordered regions span residues 1–91 and 108–163; these read MSHQ…EDFE and EEET…HEQY. Polar residues predominate over residues 44 to 54; the sequence is SELSVTVTGDG. Composition is skewed to acidic residues over residues 77 to 88 and 108 to 147; these read SASEDIELESLE and EEET…EEEE. 7 WD repeats span residues 226 to 265, 269 to 310, 316 to 356, 364 to 404, 420 to 459, 467 to 507, and 511 to 550; these read DHVG…PVLN, GHTN…YFNN, QHRG…PASK, DKKV…KKEN, DFPT…GAQY, RNNT…IIQF, and SREG…ATEL. The interval 594 to 631 is disordered; it reads QDWRSGEAEFPDEESDESSSTSETSEEEVQDRVQCMPS.

Belongs to the WD repeat DCAF8 family.

In Homo sapiens (Human), this protein is DDB1- and CUL4-associated factor 8-like protein 2 (DCAF8L2).